The following is a 525-amino-acid chain: COP9 signalosome complex subunit 1b (525 aa).

In terms of domain architecture, PCI spans 298–460 (HFLNANFDHC…KILFAKEADQ (163 aa)).

Belongs to the CSN1 family. In terms of assembly, component of the CSN complex, probably composed of CSN1b, alien/CSN2, CSN3, CSN4, CSN5, CSN6, CSN7 and CSN8.

It localises to the cytoplasm. Its subcellular location is the nucleus. Functionally, essential component of the COP9 signalosome complex (CSN), a complex involved in various cellular and developmental processes. The CSN complex is an essential regulator of the ubiquitin (Ubl) conjugation pathway by mediating the deneddylation of the cullin subunits of the SCF-type E3 ligase complexes, leading to decrease the Ubl ligase activity of SCF. The CSN complex plays an essential role in oogenesis and embryogenesis and is required for proper photoreceptor R cell differentiation and promote lamina glial cell migration or axon targeting. It also promotes Ubl-dependent degradation of cyclin E (CycE) during early oogenesis. This chain is COP9 signalosome complex subunit 1b (CSN1b), found in Drosophila melanogaster (Fruit fly).